The sequence spans 103 residues: Putative membrane protein insertion efficiency factor (103 aa).

It belongs to the UPF0161 family.

The protein resides in the cell membrane. Could be involved in insertion of integral membrane proteins into the membrane. This is Putative membrane protein insertion efficiency factor from Clavibacter sepedonicus (Clavibacter michiganensis subsp. sepedonicus).